Consider the following 124-residue polypeptide: Small ribosomal subunit protein uS12 (124 aa).

A 3-methylthioaspartic acid modification is found at aspartate 89. Residues 101–124 are disordered; that stretch reads TLDTSGVKDRRQSRSKYGAKAPKE.

It belongs to the universal ribosomal protein uS12 family. Part of the 30S ribosomal subunit. Contacts proteins S8 and S17. May interact with IF1 in the 30S initiation complex.

With S4 and S5 plays an important role in translational accuracy. Functionally, interacts with and stabilizes bases of the 16S rRNA that are involved in tRNA selection in the A site and with the mRNA backbone. Located at the interface of the 30S and 50S subunits, it traverses the body of the 30S subunit contacting proteins on the other side and probably holding the rRNA structure together. The combined cluster of proteins S8, S12 and S17 appears to hold together the shoulder and platform of the 30S subunit. The protein is Small ribosomal subunit protein uS12 of Synechococcus sp. (strain CC9902).